Here is a 367-residue protein sequence, read N- to C-terminus: DNA polymerase IV (367 aa).

Residues 14-198 form the UmuC domain; the sequence is IIHIDMDAFF…LPIEKFHGVG (185 aa). The Mg(2+) site is built by D18 and D116. Residue E117 is part of the active site.

Belongs to the DNA polymerase type-Y family. In terms of assembly, monomer. Mg(2+) is required as a cofactor.

It localises to the cytoplasm. It carries out the reaction DNA(n) + a 2'-deoxyribonucleoside 5'-triphosphate = DNA(n+1) + diphosphate. Functionally, poorly processive, error-prone DNA polymerase involved in untargeted mutagenesis. Copies undamaged DNA at stalled replication forks, which arise in vivo from mismatched or misaligned primer ends. These misaligned primers can be extended by PolIV. Exhibits no 3'-5' exonuclease (proofreading) activity. May be involved in translesional synthesis, in conjunction with the beta clamp from PolIII. The sequence is that of DNA polymerase IV from Streptococcus thermophilus (strain CNRZ 1066).